A 72-amino-acid polypeptide reads, in one-letter code: Cell division protein ZapB (72 aa).

Positions 1–72 form a coiled coil; the sequence is MSLEILDQLE…RSLLGKIDNV (72 aa). The segment at 33–57 is disordered; sequence KNNQSQQANDALRSENEQLKSEHQN. Over residues 44–57 the composition is skewed to basic and acidic residues; it reads LRSENEQLKSEHQN.

This sequence belongs to the ZapB family. As to quaternary structure, homodimer. The ends of the coiled-coil dimer bind to each other, forming polymers. Interacts with FtsZ.

It localises to the cytoplasm. Functionally, non-essential, abundant cell division factor that is required for proper Z-ring formation. It is recruited early to the divisome by direct interaction with FtsZ, stimulating Z-ring assembly and thereby promoting cell division earlier in the cell cycle. Its recruitment to the Z-ring requires functional FtsA or ZipA. In Pasteurella multocida (strain Pm70), this protein is Cell division protein ZapB.